We begin with the raw amino-acid sequence, 821 residues long: Spindle apparatus protein lin-5 (821 aa).

A disordered region spans residues 161-199; sequence EASSGFRTPKRNNYSLTSLQTPTATARRLRTASSTARRS. The span at 162–180 shows a compositional bias: polar residues; sequence ASSGFRTPKRNNYSLTSLQ. The span at 181 to 199 shows a compositional bias: low complexity; that stretch reads TPTATARRLRTASSTARRS. Positions 211–634 form a coiled coil; that stretch reads KFMRSERELK…REKESAEIKK (424 aa). Disordered stretches follow at residues 736–758 and 779–821; these read RSESIQLASPSSAGEFKQPFTPS and LKCS…SKKQ.

As to quaternary structure, interacts with gpr-1; gpr-1 forms a complex with gpr-2 and GDP-bound goa-1.

The protein resides in the cytoplasm. It localises to the cell cortex. Its subcellular location is the cytoskeleton. The protein localises to the spindle. It is found in the chromosome. The protein resides in the centromere. It localises to the kinetochore. Its subcellular location is the microtubule organizing center. The protein localises to the centrosome. In terms of biological role, essential component of the spindle apparatus required for spindle positioning and chromosome movement. Acts to recruit or anchor gpr-1/gpr-2 complex to the spindle and cortex. Also involved, directly or indirectly, in cytokinesis and in the coupling of DNA replication, centrosome duplication and mitotic division. The polypeptide is Spindle apparatus protein lin-5 (lin-5) (Caenorhabditis elegans).